The primary structure comprises 130 residues: Histone H2A.1 (130 aa).

Residues 1-21 (MSGGKGKVGSSEKASTSRSAK) form a disordered region. Serine 2 carries the post-translational modification N-acetylserine. 2 positions are modified to N6-acetyllysine: lysine 5 and lysine 7. Glutamine 105 carries the post-translational modification N5-methylglutamine. Serine 127 carries the phosphoserine modification. Positions 127 to 128 (SQ) match the [ST]-Q motif motif.

This sequence belongs to the histone H2A family. The nucleosome is a histone octamer containing two molecules each of H2A, H2B, H3 and H4 assembled in one H3-H4 heterotetramer and two H2A-H2B heterodimers. The octamer wraps approximately 147 bp of DNA. In terms of processing, phosphorylated to form H2AS128ph (gamma-H2A) in response to DNA double-strand breaks (DSBs) generated by exogenous genotoxic agents and by stalled replication forks. Phosphorylation is dependent on the DNA damage checkpoint kinases MEC1/ATR and TEL1/ATM, spreads on either side of a detected DSB site and may mark the surrounding chromatin for recruitment of proteins required for DNA damage signaling and repair. Gamma-H2A is removed from the DNA prior to the strand invasion-primer extension step of the repair process and subsequently dephosphorylated. Dephosphorylation is necessary for efficient recovery from the DNA damage checkpoint. Acetylated by ESA1 to form H2AK4ac and H2AK7ac.

It is found in the nucleus. It localises to the chromosome. Its function is as follows. Core component of nucleosome which plays a central role in DNA double strand break (DSB) repair. Nucleosomes wrap and compact DNA into chromatin, limiting DNA accessibility to the cellular machineries which require DNA as a template. Histones thereby play a central role in transcription regulation, DNA repair, DNA replication and chromosomal stability. DNA accessibility is regulated via a complex set of post-translational modifications of histones, also called histone code, and nucleosome remodeling. The polypeptide is Histone H2A.1 (HTA1) (Meyerozyma guilliermondii (strain ATCC 6260 / CBS 566 / DSM 6381 / JCM 1539 / NBRC 10279 / NRRL Y-324) (Yeast)).